A 121-amino-acid chain; its full sequence is Large ribosomal subunit protein uL14 (121 aa).

This sequence belongs to the universal ribosomal protein uL14 family. Part of the 50S ribosomal subunit. Forms a cluster with proteins L3 and L19. In the 70S ribosome, L14 and L19 interact and together make contacts with the 16S rRNA in bridges B5 and B8.

In terms of biological role, binds to 23S rRNA. Forms part of two intersubunit bridges in the 70S ribosome. The protein is Large ribosomal subunit protein uL14 of Aquifex aeolicus (strain VF5).